The primary structure comprises 130 residues: Small ribosomal subunit protein uS9 (130 aa).

Belongs to the universal ribosomal protein uS9 family.

The protein is Small ribosomal subunit protein uS9 of Pasteurella multocida (strain Pm70).